Here is a 266-residue protein sequence, read N- to C-terminus: MKAVVLTLAVLFLTGSQARHFWQQDDPQSPWDRVKDLVTVYVDAVKDGGREYVAQFEASALGKQLNLKLLDNWDTLGSTVTKLREQIGPVTQEFWDNLEKETEVLRQEMSKDLEEVKQKVQPYLDDFQKKWQEEVELYRQKVAPLGTELREGARQKLQELHEKLSPLGEELRDRARTHVDALRAQLAPYSDELRERLAARLQALKESGGASLAEYHAKASEHLSTLSEKAKPALEDLRQGLLPVLESFKVGLMAIVDEATKKLNAQ.

The signal sequence occupies residues 1–18 (MKAVVLTLAVLFLTGSQA). Tandem repeats lie at residues 67-88 (LKLLDNWDTLGSTVTKLREQIG) and 89-110 (PVTQEFWDNLEKETEVLRQEMS). The interval 67–266 (LKLLDNWDTL…DEATKKLNAQ (200 aa)) is 10 X approximate tandem repeats. At Met-109 the chain carries Methionine sulfoxide. The stretch at 111 to 121 (KDLEEVKQKVQ) is one 3; half-length repeat. Tandem repeats lie at residues 122-143 (PYLDDFQKKWQEEVELYRQKVA), 144-165 (PLGTELREGARQKLQELHEKLS), 166-187 (PLGEELRDRARTHVDALRAQLA), 188-209 (PYSDELRERLAARLQALKESGG), and 210-231 (ASLAEYHAKASEHLSTLSEKAK). A 9; half-length repeat occupies 232 to 242 (PALEDLRQGLL). Residues 243 to 266 (PVLESFKVGLMAIVDEATKKLNAQ) form repeat 10.

The protein belongs to the apolipoprotein A1/A4/E family. As to quaternary structure, homodimer. Interacts with APOA1BP and CLU. Component of a sperm activating protein complex (SPAP), consisting of APOA1, an immunoglobulin heavy chain, an immunoglobulin light chain and albumin. Interacts with NDRG1. Interacts with SCGB3A2. Interacts with NAXE and YJEFN3. Glycosylated. In terms of processing, palmitoylated. Post-translationally, phosphorylation sites are present in the extracellular medium.

The protein resides in the secreted. Its function is as follows. Participates in the reverse transport of cholesterol from tissues to the liver for excretion by promoting cholesterol efflux from tissues and by acting as a cofactor for the lecithin cholesterol acyltransferase (LCAT). As part of the SPAP complex, activates spermatozoa motility. This Acinonyx jubatus (Cheetah) protein is Apolipoprotein A-I (APOA1).